A 335-amino-acid chain; its full sequence is MPAVLGFEGSANKIGVGVVRDGKVLANPRRTYVTPPGTGFLPGDTARHHRAVILDLLQEALTESGLTSQDIDCIAYTKGPGMGAPLVSVAVVARTVAQLWNKPLVGVNHCIGHIEMGRLITGATSPTVLYVSGGNTQVIAYSEHRYRIFGETIDIAVGNCLDRFARVLKISNDPSPGYNIEQMAKRGKKLVELPYTVKGMDVSFSGILSFIEDVAHRMLATGECTPEDLCFSLQETVFAMLVEITERAMAHCGSQEALIVGGVGCNVRLQEMMATMCQERGARLFATDERFCIDNGAMIAQAGWEMFRAGHRTPLSDSGVTQRYRTDEVEVTWRD.

Residues histidine 109, histidine 113, and tyrosine 130 each contribute to the a divalent metal cation site. Residues 130–134, aspartate 162, glycine 177, glutamate 181, and asparagine 266 contribute to the substrate site; that span reads YVSGG. Aspartate 294 contributes to the a divalent metal cation binding site.

Belongs to the KAE1 / TsaD family. Component of the EKC/KEOPS complex composed of at least GON7, TP53RK, TPRKB, OSGEP and LAGE3; the whole complex dimerizes. Interacts with PRAME. It depends on a divalent metal cation as a cofactor. As to expression, widely expressed at low level. Expressed in heart, placenta, liver, kidney, lung, brain, skeletal muscle and pancreas.

The protein localises to the cytoplasm. The protein resides in the nucleus. The enzyme catalyses L-threonylcarbamoyladenylate + adenosine(37) in tRNA = N(6)-L-threonylcarbamoyladenosine(37) in tRNA + AMP + H(+). Component of the EKC/KEOPS complex that is required for the formation of a threonylcarbamoyl group on adenosine at position 37 (t(6)A37) in tRNAs that read codons beginning with adenine. The complex is probably involved in the transfer of the threonylcarbamoyl moiety of threonylcarbamoyl-AMP (TC-AMP) to the N6 group of A37. OSGEP likely plays a direct catalytic role in this reaction, but requires other protein(s) of the complex to fulfill this activity. The polypeptide is tRNA N6-adenosine threonylcarbamoyltransferase (Homo sapiens (Human)).